Consider the following 208-residue polypeptide: ATP phosphoribosyltransferase (208 aa).

Belongs to the ATP phosphoribosyltransferase family. Short subfamily. In terms of assembly, heteromultimer composed of HisG and HisZ subunits.

It localises to the cytoplasm. It carries out the reaction 1-(5-phospho-beta-D-ribosyl)-ATP + diphosphate = 5-phospho-alpha-D-ribose 1-diphosphate + ATP. It participates in amino-acid biosynthesis; L-histidine biosynthesis; L-histidine from 5-phospho-alpha-D-ribose 1-diphosphate: step 1/9. Functionally, catalyzes the condensation of ATP and 5-phosphoribose 1-diphosphate to form N'-(5'-phosphoribosyl)-ATP (PR-ATP). Has a crucial role in the pathway because the rate of histidine biosynthesis seems to be controlled primarily by regulation of HisG enzymatic activity. In Thermotoga maritima (strain ATCC 43589 / DSM 3109 / JCM 10099 / NBRC 100826 / MSB8), this protein is ATP phosphoribosyltransferase (hisG).